A 428-amino-acid polypeptide reads, in one-letter code: UPF0761 membrane protein TERTU_3006 (428 aa).

7 consecutive transmembrane segments (helical) span residues 47–67, 104–124, 143–163, 189–209, 218–238, 248–268, and 292–312; these read LFAL…IPAF, LSGV…RNIE, YLLY…AFLL, VVPW…VPNC, IGGV…GYIV, GAFA…TIIL, and MIVV…GESV.

Belongs to the UPF0761 family.

It is found in the cell inner membrane. The polypeptide is UPF0761 membrane protein TERTU_3006 (Teredinibacter turnerae (strain ATCC 39867 / T7901)).